The chain runs to 197 residues: Xanthine phosphoribosyltransferase (197 aa).

Xanthine is bound by residues leucine 20 and asparagine 27. A 5-phospho-alpha-D-ribose 1-diphosphate-binding site is contributed by 128-132; that stretch reads ANGQA. Position 156 (lysine 156) interacts with xanthine.

It belongs to the purine/pyrimidine phosphoribosyltransferase family. Xpt subfamily. As to quaternary structure, homodimer.

It is found in the cytoplasm. The enzyme catalyses XMP + diphosphate = xanthine + 5-phospho-alpha-D-ribose 1-diphosphate. It functions in the pathway purine metabolism; XMP biosynthesis via salvage pathway; XMP from xanthine: step 1/1. Converts the preformed base xanthine, a product of nucleic acid breakdown, to xanthosine 5'-monophosphate (XMP), so it can be reused for RNA or DNA synthesis. In Bacillus cereus (strain ZK / E33L), this protein is Xanthine phosphoribosyltransferase.